We begin with the raw amino-acid sequence, 669 residues long: 5-taurinomethyluridine-[tRNA] synthase subunit MTO1, mitochondrial (669 aa).

The N-terminal 25 residues, 1–25, are a transit peptide targeting the mitochondrion; the sequence is MFLLRGRGHWAAASLGRRLPLRRLR. FAD-binding positions include 42–47, valine 154, serine 217, and glutamine 406; that span reads GGGHAG. At lysine 507 the chain carries N6-methyllysine.

It belongs to the MnmG family. In terms of assembly, homodimer; forms a dimer in the presence of potassium. Interacts with GTPBP3; forms the GTPBP3-MTO1 complex composed of homodimers of GTPBP3 and MTO1. The cofactor is FAD. Ubiquitously expressed in various tissues, but with markedly elevated expression in tissues of high metabolic rates.

It is found in the mitochondrion. It catalyses the reaction 5,10-methylenetetrahydrofolate + uridine(34) in tRNA + taurine + GTP + A + H2O = 5-taurinomethyluridine(34) in tRNA + 7,8-dihydrofolate + GDP + AH2 + phosphate + H(+). Its function is as follows. Component of the GTPBP3-MTO1 complex that catalyzes the 5-taurinomethyluridine (taum(5)U) modification at the 34th wobble position (U34) of mitochondrial tRNAs (mt-tRNAs), which plays a role in mt-tRNA decoding and mitochondrial translation. Taum(5)U formation on mammalian mt-tRNA requires the presence of both GTPBP3-mediated GTPase activity and MTO1 catalytic activity. The sequence is that of 5-taurinomethyluridine-[tRNA] synthase subunit MTO1, mitochondrial from Mus musculus (Mouse).